The primary structure comprises 1178 residues: DNA-directed RNA polymerase subunit beta' (1178 aa).

C60, C62, C75, and C78 together coordinate Zn(2+). Mg(2+)-binding residues include D450, D452, and D454. Zn(2+) is bound by residues C795, C869, C876, and C879.

Belongs to the RNA polymerase beta' chain family. In terms of assembly, the RNAP catalytic core consists of 2 alpha, 1 beta, 1 beta' and 1 omega subunit. When a sigma factor is associated with the core the holoenzyme is formed, which can initiate transcription. Requires Mg(2+) as cofactor. Zn(2+) serves as cofactor.

It carries out the reaction RNA(n) + a ribonucleoside 5'-triphosphate = RNA(n+1) + diphosphate. In terms of biological role, DNA-dependent RNA polymerase catalyzes the transcription of DNA into RNA using the four ribonucleoside triphosphates as substrates. The protein is DNA-directed RNA polymerase subunit beta' of Clostridium beijerinckii (strain ATCC 51743 / NCIMB 8052) (Clostridium acetobutylicum).